Consider the following 468-residue polypeptide: IQ domain-containing protein C (468 aa).

One can recognise an IQ domain in the interval 6-35 (LVLKVTALQACIRGFLVRRQFQSLRGEYEA). 3 disordered regions span residues 113–157 (NASS…GPGL), 202–245 (EVNQ…PGEP), and 329–468 (SHKE…GPAG). The segment covering 139–150 (QETRDVSRKNDP) has biased composition (basic and acidic residues). The segment covering 415 to 426 (SSIERSPSESSH) has biased composition (basic and acidic residues).

The sequence is that of IQ domain-containing protein C (IQCC) from Bos taurus (Bovine).